Here is a 419-residue protein sequence, read N- to C-terminus: Transcription termination factor Rho (419 aa).

The 76-residue stretch at 48–123 (DIFGDGVLEI…LKVNAVNYDK (76 aa)) folds into the Rho RNA-BD domain. RNA-binding regions lie at residues 61 to 66 (GFGFLR), 78 to 80 (DIY), and 108 to 110 (ERY). ATP-binding positions include 169 to 174 (GRGQRG), 181 to 186 (KAGKTI), and arginine 212. The tract at residues 284–288 (VLTGG) is RNA-binding 2.

Belongs to the Rho family. Homohexamer. The homohexamer assembles into an open ring structure.

Facilitates transcription termination by a mechanism that involves Rho binding to the nascent RNA, activation of Rho's RNA-dependent ATPase activity, and release of the mRNA from the DNA template. The sequence is that of Transcription termination factor Rho from Buchnera aphidicola subsp. Schizaphis graminum (strain Sg).